Consider the following 724-residue polypeptide: Phenylalanine ammonia-lyase (724 aa).

The active-site Proton donor/acceptor is tyrosine 99. Positions 204–206 (ASG) form a cross-link, 5-imidazolinone (Ala-Gly). Residue serine 205 is modified to 2,3-didehydroalanine (Ser). (E)-cinnamate contacts are provided by asparagine 265, glutamine 355, arginine 361, asparagine 391, lysine 462, glutamate 490, and asparagine 493.

Belongs to the PAL/histidase family. Homotetramer. In terms of processing, contains an active site 4-methylidene-imidazol-5-one (MIO), which is formed autocatalytically by cyclization and dehydration of residues Ala-Ser-Gly.

Its subcellular location is the cytoplasm. It catalyses the reaction L-phenylalanine = (E)-cinnamate + NH4(+). The protein operates within phenylpropanoid metabolism; trans-cinnamate biosynthesis; trans-cinnamate from L-phenylalanine: step 1/1. In terms of biological role, catalyzes the non-oxidative deamination of L-phenylalanine to form trans-cinnamic acid and a free ammonium ion. Facilitates the commitment step in phenylpropanoid pathways that produce secondary metabolites such as lignins, coumarins and flavonoids. This is Phenylalanine ammonia-lyase from Flammulina velutipes (Agaricus velutipes).